A 427-amino-acid chain; its full sequence is Peptidase B (427 aa).

Mn(2+) contacts are provided by Lys195 and Asp200. The active site involves Lys207. Residues Asp218, Asp277, and Glu279 each coordinate Mn(2+). Arg281 is an active-site residue.

This sequence belongs to the peptidase M17 family. As to quaternary structure, homohexamer. Requires Mn(2+) as cofactor.

It localises to the cytoplasm. It carries out the reaction Release of an N-terminal amino acid, Xaa, from a peptide or arylamide. Xaa is preferably Glu or Asp but may be other amino acids, including Leu, Met, His, Cys and Gln.. Functionally, probably plays an important role in intracellular peptide degradation. The polypeptide is Peptidase B (Escherichia coli (strain SMS-3-5 / SECEC)).